We begin with the raw amino-acid sequence, 67 residues long: Beta-defensin 110 (67 aa).

The first 19 residues, 1-19, serve as a signal peptide directing secretion; it reads MKIQLFFFILLFWVTILPA. Disulfide bonds link C35–C63, C42–C56, and C46–C64.

It belongs to the beta-defensin family.

The protein resides in the secreted. Functionally, has antibacterial activity. This chain is Beta-defensin 110 (DEFB110), found in Pan troglodytes (Chimpanzee).